The chain runs to 104 residues: uncharacterized protein (104 aa).

Positions 1 to 18 are cleaved as a signal peptide; it reads MGVEGMWNVFLFSLQVAA. N27 is a glycosylation site (N-linked (GlcNAc...) asparagine; by host).

This is an uncharacterized protein from Fowl adenovirus A serotype 1 (strain CELO / Phelps) (FAdV-1).